The sequence spans 361 residues: UDP-N-acetylglucosamine--N-acetylmuramyl-(pentapeptide) pyrophosphoryl-undecaprenol N-acetylglucosamine transferase (361 aa).

Residues 13–15 (TGG), Asn-125, Arg-167, Ser-196, Ile-251, 270–275 (ALTVTE), and Gln-296 each bind UDP-N-acetyl-alpha-D-glucosamine.

Belongs to the glycosyltransferase 28 family. MurG subfamily.

It localises to the cell inner membrane. The catalysed reaction is di-trans,octa-cis-undecaprenyl diphospho-N-acetyl-alpha-D-muramoyl-L-alanyl-D-glutamyl-meso-2,6-diaminopimeloyl-D-alanyl-D-alanine + UDP-N-acetyl-alpha-D-glucosamine = di-trans,octa-cis-undecaprenyl diphospho-[N-acetyl-alpha-D-glucosaminyl-(1-&gt;4)]-N-acetyl-alpha-D-muramoyl-L-alanyl-D-glutamyl-meso-2,6-diaminopimeloyl-D-alanyl-D-alanine + UDP + H(+). The protein operates within cell wall biogenesis; peptidoglycan biosynthesis. Cell wall formation. Catalyzes the transfer of a GlcNAc subunit on undecaprenyl-pyrophosphoryl-MurNAc-pentapeptide (lipid intermediate I) to form undecaprenyl-pyrophosphoryl-MurNAc-(pentapeptide)GlcNAc (lipid intermediate II). This Psychrobacter cryohalolentis (strain ATCC BAA-1226 / DSM 17306 / VKM B-2378 / K5) protein is UDP-N-acetylglucosamine--N-acetylmuramyl-(pentapeptide) pyrophosphoryl-undecaprenol N-acetylglucosamine transferase.